A 227-amino-acid polypeptide reads, in one-letter code: Phosphoglycolate phosphatase (227 aa).

Catalysis depends on aspartate 8, which acts as the Nucleophile. Residues aspartate 8 and aspartate 10 each contribute to the Mg(2+) site. Lysine 152 is a binding site for substrate. Residues aspartate 175 and aspartate 179 each contribute to the Mg(2+) site.

This sequence belongs to the archaeal SPP-like hydrolase family. The cofactor is Mg(2+).

The catalysed reaction is 2-phosphoglycolate + H2O = glycolate + phosphate. Functionally, catalyzes the dephosphorylation of 2-phosphoglycolate. This chain is Phosphoglycolate phosphatase, found in Halorubrum lacusprofundi (strain ATCC 49239 / DSM 5036 / JCM 8891 / ACAM 34).